A 490-amino-acid chain; its full sequence is Glutamate--tRNA ligase (490 aa).

A 'HIGH' region motif is present at residues 12-22 (PSPTGTPHVGL). The 'KMSKS' region motif lies at 256–260 (KLSKR). ATP is bound at residue K259.

Belongs to the class-I aminoacyl-tRNA synthetase family. Glutamate--tRNA ligase type 1 subfamily. In terms of assembly, monomer.

The protein localises to the cytoplasm. The enzyme catalyses tRNA(Glu) + L-glutamate + ATP = L-glutamyl-tRNA(Glu) + AMP + diphosphate. Functionally, catalyzes the attachment of glutamate to tRNA(Glu) in a two-step reaction: glutamate is first activated by ATP to form Glu-AMP and then transferred to the acceptor end of tRNA(Glu). The protein is Glutamate--tRNA ligase of Mycobacterium sp. (strain JLS).